The following is a 115-amino-acid chain: Large ribosomal subunit protein bL20 (115 aa).

It belongs to the bacterial ribosomal protein bL20 family.

Functionally, binds directly to 23S ribosomal RNA and is necessary for the in vitro assembly process of the 50S ribosomal subunit. It is not involved in the protein synthesizing functions of that subunit. This Prochlorococcus marinus (strain MIT 9313) protein is Large ribosomal subunit protein bL20.